We begin with the raw amino-acid sequence, 537 residues long: P2Y purinoceptor 4 (537 aa).

Topologically, residues 1–49 (MTEDIMATSYPTFLTTPYLPMKLLMNLTNDTEDICVFDEGFKFLLLPVS) are extracellular. Residues asparagine 26 and asparagine 29 are each glycosylated (N-linked (GlcNAc...) asparagine). The chain crosses the membrane as a helical span at residues 50–70 (YSAVFMVGLPLNIAAMWIFIA). Residues 71-79 (KMRPWNPTT) lie on the Cytoplasmic side of the membrane. Residues 80 to 100 (VYMFNLALSDTLYVLSLPTLV) form a helical membrane-spanning segment. The Extracellular segment spans residues 101 to 118 (YYYADKNNWPFGEVLCKL). Cysteines 116 and 193 form a disulfide. The helical transmembrane segment at 119–139 (VRFLFYANLYSSILFLTCISV) threads the bilayer. Residues 140–161 (HRYRGVCHPITSLRRMNAKHAY) lie on the Cytoplasmic side of the membrane. The helical transmembrane segment at 162 to 182 (VICALVWLSVTLCLVPNLIFV) threads the bilayer. Residues 183 to 210 (TVSPKVKNTICHDTTRPEDFARYVEYST) lie on the Extracellular side of the membrane. Residues 211 to 231 (AIMCLLFGIPCLIIAGCYGLM) form a helical membrane-spanning segment. Over 232–254 (TRELMKPIVSGNQQTLPSYKKRS) the chain is Cytoplasmic. The helical transmembrane segment at 255-275 (IKTIIFVMIAFAICFMPFHIT) threads the bilayer. Residues 276–292 (RTLYYYARLLGIKCYAL) lie on the Extracellular side of the membrane. The chain crosses the membrane as a helical span at residues 293–316 (NVINVTYKVTRPLASANSCIDPIL). The Cytoplasmic portion of the chain corresponds to 317-537 (YFLANDRYRR…EKELQNFPKA (221 aa)). A disordered region spans residues 401–505 (NRRSTIKRNS…GEGTSTWNLL (105 aa)). Composition is skewed to basic and acidic residues over residues 409–423 (NSTDKNDMKENRHGE) and 431–447 (VVEKEDYETKRENRKTT). Polar residues predominate over residues 448–465 (EQSSKTNAEQDELQTQID).

It belongs to the G-protein coupled receptor 1 family.

It localises to the cell membrane. In terms of biological role, receptor for extracellular ATP, UTP, CTP, GTP and ITP. The activity of this receptor is mediated by G proteins which activate a phosphatidylinositol-calcium second messenger system. May play a key role in the early development of neural tissue. The sequence is that of P2Y purinoceptor 4 (p2ry4) from Xenopus laevis (African clawed frog).